The chain runs to 94 residues: Ammonia regulation of amino acid uptake protein (94 aa).

2 repeats span residues 48–57 and 58–67; these read HHQIRRRTHQ.

Functionally, involved in ammonia regulation of the GAP1 permease. This chain is Ammonia regulation of amino acid uptake protein (AUA1), found in Saccharomyces cerevisiae (strain ATCC 204508 / S288c) (Baker's yeast).